We begin with the raw amino-acid sequence, 192 residues long: Probable nicotinate-nucleotide adenylyltransferase (192 aa).

This sequence belongs to the NadD family.

The enzyme catalyses nicotinate beta-D-ribonucleotide + ATP + H(+) = deamido-NAD(+) + diphosphate. It participates in cofactor biosynthesis; NAD(+) biosynthesis; deamido-NAD(+) from nicotinate D-ribonucleotide: step 1/1. In terms of biological role, catalyzes the reversible adenylation of nicotinate mononucleotide (NaMN) to nicotinic acid adenine dinucleotide (NaAD). The polypeptide is Probable nicotinate-nucleotide adenylyltransferase (Cytophaga hutchinsonii (strain ATCC 33406 / DSM 1761 / CIP 103989 / NBRC 15051 / NCIMB 9469 / D465)).